A 137-amino-acid polypeptide reads, in one-letter code: Large ribosomal subunit protein uL16c (137 aa).

The protein belongs to the universal ribosomal protein uL16 family. Part of the 50S ribosomal subunit.

It is found in the plastid. The sequence is that of Large ribosomal subunit protein uL16c from Cuscuta exaltata (Tall dodder).